The primary structure comprises 440 residues: tRNA(Ile)-lysidine synthase (440 aa).

An ATP-binding site is contributed by 13–18 (SGGADS).

This sequence belongs to the tRNA(Ile)-lysidine synthase family.

The protein resides in the cytoplasm. The enzyme catalyses cytidine(34) in tRNA(Ile2) + L-lysine + ATP = lysidine(34) in tRNA(Ile2) + AMP + diphosphate + H(+). Ligates lysine onto the cytidine present at position 34 of the AUA codon-specific tRNA(Ile) that contains the anticodon CAU, in an ATP-dependent manner. Cytidine is converted to lysidine, thus changing the amino acid specificity of the tRNA from methionine to isoleucine. This Solibacter usitatus (strain Ellin6076) protein is tRNA(Ile)-lysidine synthase.